The following is a 101-amino-acid chain: DNA-binding protein Fis (101 aa).

A DNA-binding region (H-T-H motif) is located at residues 77–96 (QTRAANMLGINRGTLRKKLK).

It belongs to the transcriptional regulatory Fis family. Homodimer.

Its function is as follows. Activates ribosomal RNA transcription. Plays a direct role in upstream activation of rRNA promoters. This is DNA-binding protein Fis from Shewanella pealeana (strain ATCC 700345 / ANG-SQ1).